The chain runs to 262 residues: tRNA pseudouridine synthase A (262 aa).

Asp-52 acts as the Nucleophile in catalysis. Residue Tyr-110 participates in substrate binding.

The protein belongs to the tRNA pseudouridine synthase TruA family. Homodimer.

It catalyses the reaction uridine(38/39/40) in tRNA = pseudouridine(38/39/40) in tRNA. In terms of biological role, formation of pseudouridine at positions 38, 39 and 40 in the anticodon stem and loop of transfer RNAs. This is tRNA pseudouridine synthase A from Hydrogenovibrio crunogenus (strain DSM 25203 / XCL-2) (Thiomicrospira crunogena).